The sequence spans 243 residues: Probable enoyl-CoA hydratase echA6 (243 aa).

The protein belongs to the enoyl-CoA hydratase/isomerase family.

The catalysed reaction is a (3S)-3-hydroxyacyl-CoA = a (2E)-enoyl-CoA + H2O. It catalyses the reaction a 4-saturated-(3S)-3-hydroxyacyl-CoA = a (3E)-enoyl-CoA + H2O. Its function is as follows. Could possibly oxidize fatty acids using specific components. The protein is Probable enoyl-CoA hydratase echA6 (echA6) of Mycobacterium bovis (strain ATCC BAA-935 / AF2122/97).